Here is a 594-residue protein sequence, read N- to C-terminus: Adenine deaminase 1 (594 aa).

This sequence belongs to the metallo-dependent hydrolases superfamily. Adenine deaminase family. The cofactor is Mn(2+).

It carries out the reaction adenine + H2O + H(+) = hypoxanthine + NH4(+). This is Adenine deaminase 1 from Desulfotalea psychrophila (strain LSv54 / DSM 12343).